A 371-amino-acid polypeptide reads, in one-letter code: Mannonate dehydratase (371 aa).

The protein belongs to the mannonate dehydratase family. The cofactor is Fe(2+). Mn(2+) is required as a cofactor.

The enzyme catalyses D-mannonate = 2-dehydro-3-deoxy-D-gluconate + H2O. Its pathway is carbohydrate metabolism; pentose and glucuronate interconversion. Its function is as follows. Catalyzes the dehydration of D-mannonate. The polypeptide is Mannonate dehydratase (uxuA) (Geobacillus stearothermophilus (Bacillus stearothermophilus)).